The primary structure comprises 375 residues: Phospho-N-acetylmuramoyl-pentapeptide-transferase (375 aa).

10 helical membrane-spanning segments follow: residues 2 to 22 (IGLL…TPLF), 55 to 75 (AVII…LAVL), 82 to 102 (PTAS…VGFV), 120 to 140 (GKII…LNFP), 158 to 178 (IPWL…FVIW), 198 to 218 (GLAT…SLFQ), 237 to 257 (PMDL…FLWW), 264 to 284 (IFMG…FAIF), 289 to 309 (ILVA…IIQV), and 345 to 365 (WLLS…DWLI).

Belongs to the glycosyltransferase 4 family. MraY subfamily. It depends on Mg(2+) as a cofactor.

The protein localises to the cell membrane. The enzyme catalyses UDP-N-acetyl-alpha-D-muramoyl-L-alanyl-gamma-D-glutamyl-meso-2,6-diaminopimeloyl-D-alanyl-D-alanine + di-trans,octa-cis-undecaprenyl phosphate = di-trans,octa-cis-undecaprenyl diphospho-N-acetyl-alpha-D-muramoyl-L-alanyl-D-glutamyl-meso-2,6-diaminopimeloyl-D-alanyl-D-alanine + UMP. Its pathway is cell wall biogenesis; peptidoglycan biosynthesis. Catalyzes the initial step of the lipid cycle reactions in the biosynthesis of the cell wall peptidoglycan: transfers peptidoglycan precursor phospho-MurNAc-pentapeptide from UDP-MurNAc-pentapeptide onto the lipid carrier undecaprenyl phosphate, yielding undecaprenyl-pyrophosphoryl-MurNAc-pentapeptide, known as lipid I. The protein is Phospho-N-acetylmuramoyl-pentapeptide-transferase of Micrococcus luteus (strain ATCC 4698 / DSM 20030 / JCM 1464 / CCM 169 / CCUG 5858 / IAM 1056 / NBRC 3333 / NCIMB 9278 / NCTC 2665 / VKM Ac-2230) (Micrococcus lysodeikticus).